We begin with the raw amino-acid sequence, 90 residues long: MTSRAKSLFIFFFLISCTFMLLETDASRNKLSSYIPLCGSNTYCGGLWCPKKGGKYSCISMSCDIQEDCPKLVRCKNSPGPYCMEGFCTC.

A signal peptide spans 1–26 (MTSRAKSLFIFFFLISCTFMLLETDA). 3 disulfide bridges follow: Cys-63–Cys-83, Cys-69–Cys-88, and Cys-75–Cys-90.

This sequence belongs to the DEFL family.

Its subcellular location is the secreted. In Arabidopsis thaliana (Mouse-ear cress), this protein is Defensin-like protein 293.